We begin with the raw amino-acid sequence, 167 residues long: Endoribonuclease YbeY (167 aa).

The Zn(2+) site is built by His-126, His-130, and His-136.

This sequence belongs to the endoribonuclease YbeY family. It depends on Zn(2+) as a cofactor.

It localises to the cytoplasm. In terms of biological role, single strand-specific metallo-endoribonuclease involved in late-stage 70S ribosome quality control and in maturation of the 3' terminus of the 16S rRNA. The protein is Endoribonuclease YbeY of Novosphingobium aromaticivorans (strain ATCC 700278 / DSM 12444 / CCUG 56034 / CIP 105152 / NBRC 16084 / F199).